The following is a 319-amino-acid chain: Acetyl esterase (319 aa).

The short motif at 91–93 (HGG) is the Involved in the stabilization of the negatively charged intermediate by the formation of the oxyanion hole element. Residues Ser165, Asp262, and His292 contribute to the active site.

Belongs to the 'GDXG' lipolytic enzyme family. In terms of assembly, homodimer. Interacts with MalT and MelA.

The protein localises to the cytoplasm. Its function is as follows. Displays esterase activity towards short chain fatty esters (acyl chain length of up to 8 carbons). Able to hydrolyze triacetylglycerol (triacetin) and tributyrylglycerol (tributyrin), but not trioleylglycerol (triolein) or cholesterol oleate. Negatively regulates MalT activity by antagonizing maltotriose binding. Inhibits MelA galactosidase activity. The sequence is that of Acetyl esterase from Escherichia coli O127:H6 (strain E2348/69 / EPEC).